Here is a 276-residue protein sequence, read N- to C-terminus: NAD-capped RNA hydrolase NudC (276 aa).

R82 provides a ligand contact to substrate. Zn(2+)-binding residues include C112 and C115. Residue E125 participates in substrate binding. Zn(2+) contacts are provided by C130 and C133. Y138 is a substrate binding site. A Nudix hydrolase domain is found at 139–262 (PRISPSMIVL…SIARYLIDLY (124 aa)). Positions 172, 188, and 192 each coordinate a divalent metal cation. The Nudix box motif lies at 173 to 194 (GFAEPGESAEDCLVREVREEVA). 206-213 (QCWPFPHS) is a substrate binding site. E233 contributes to the a divalent metal cation binding site. Residue A255 coordinates substrate.

The protein belongs to the Nudix hydrolase family. NudC subfamily. As to quaternary structure, homodimer. Mg(2+) is required as a cofactor. It depends on Mn(2+) as a cofactor. Zn(2+) serves as cofactor.

The catalysed reaction is a 5'-end NAD(+)-phospho-ribonucleoside in mRNA + H2O = a 5'-end phospho-adenosine-phospho-ribonucleoside in mRNA + beta-nicotinamide D-ribonucleotide + 2 H(+). The enzyme catalyses NAD(+) + H2O = beta-nicotinamide D-ribonucleotide + AMP + 2 H(+). It catalyses the reaction NADH + H2O = reduced beta-nicotinamide D-ribonucleotide + AMP + 2 H(+). Functionally, mRNA decapping enzyme that specifically removes the nicotinamide adenine dinucleotide (NAD) cap from a subset of mRNAs by hydrolyzing the diphosphate linkage to produce nicotinamide mononucleotide (NMN) and 5' monophosphate mRNA. The NAD-cap is present at the 5'-end of some mRNAs and stabilizes RNA against 5'-processing. Has preference for mRNAs with a 5'-end purine. Catalyzes the hydrolysis of a broad range of dinucleotide pyrophosphates. This is NAD-capped RNA hydrolase NudC from Pseudomonas putida (strain ATCC 47054 / DSM 6125 / CFBP 8728 / NCIMB 11950 / KT2440).